The sequence spans 319 residues: Probable ABC transporter permease protein MG189 homolog (319 aa).

A run of 6 helical transmembrane segments spans residues 41–61, 98–118, 134–154, 169–189, 229–249, and 282–302; these read VVLCFFGLMVIFPFYLMLVVA, AIWINSLVTILSIILRLFFTV, LFWFIFLAVLILPESALLIGQ, PAIILGLTMPFVASVFSGFMF, TVSILTAFAAWNSYLWPLLLL, and NLKMAAAILAILPMFIVYFLF. One can recognise an ABC transmembrane type-1 domain in the interval 99–302; that stretch reads IWINSLVTIL…LPMFIVYFLF (204 aa).

This sequence belongs to the binding-protein-dependent transport system permease family. MalFG subfamily.

The protein resides in the cell membrane. In terms of biological role, probably part of a binding-protein-dependent transport system. Probably responsible for the translocation of the substrate across the membrane. The chain is Probable ABC transporter permease protein MG189 homolog from Mycoplasma pneumoniae (strain ATCC 29342 / M129 / Subtype 1) (Mycoplasmoides pneumoniae).